The following is a 133-amino-acid chain: Ribosome-binding factor A (133 aa).

Belongs to the RbfA family. In terms of assembly, monomer. Binds 30S ribosomal subunits, but not 50S ribosomal subunits or 70S ribosomes.

Its subcellular location is the cytoplasm. Functionally, one of several proteins that assist in the late maturation steps of the functional core of the 30S ribosomal subunit. Associates with free 30S ribosomal subunits (but not with 30S subunits that are part of 70S ribosomes or polysomes). Required for efficient processing of 16S rRNA. May interact with the 5'-terminal helix region of 16S rRNA. This is Ribosome-binding factor A from Escherichia coli O127:H6 (strain E2348/69 / EPEC).